The chain runs to 398 residues: tRNA(Ile)-lysidine synthase (398 aa).

25–30 is an ATP binding site; it reads SGGVDS.

Belongs to the tRNA(Ile)-lysidine synthase family.

Its subcellular location is the cytoplasm. It carries out the reaction cytidine(34) in tRNA(Ile2) + L-lysine + ATP = lysidine(34) in tRNA(Ile2) + AMP + diphosphate + H(+). Ligates lysine onto the cytidine present at position 34 of the AUA codon-specific tRNA(Ile) that contains the anticodon CAU, in an ATP-dependent manner. Cytidine is converted to lysidine, thus changing the amino acid specificity of the tRNA from methionine to isoleucine. The sequence is that of tRNA(Ile)-lysidine synthase from Francisella tularensis subsp. holarctica (strain OSU18).